The primary structure comprises 227 residues: Phosphoribosylformylglycinamidine synthase subunit PurQ (227 aa).

The region spanning 2-226 (KFAVIQFPGS…VKAWKEEQVN (225 aa)) is the Glutamine amidotransferase type-1 domain. Residue cysteine 86 is the Nucleophile of the active site. Active-site residues include histidine 195 and glutamate 197.

In terms of assembly, part of the FGAM synthase complex composed of 1 PurL, 1 PurQ and 2 PurS subunits.

The protein localises to the cytoplasm. It catalyses the reaction N(2)-formyl-N(1)-(5-phospho-beta-D-ribosyl)glycinamide + L-glutamine + ATP + H2O = 2-formamido-N(1)-(5-O-phospho-beta-D-ribosyl)acetamidine + L-glutamate + ADP + phosphate + H(+). It carries out the reaction L-glutamine + H2O = L-glutamate + NH4(+). It participates in purine metabolism; IMP biosynthesis via de novo pathway; 5-amino-1-(5-phospho-D-ribosyl)imidazole from N(2)-formyl-N(1)-(5-phospho-D-ribosyl)glycinamide: step 1/2. Part of the phosphoribosylformylglycinamidine synthase complex involved in the purines biosynthetic pathway. Catalyzes the ATP-dependent conversion of formylglycinamide ribonucleotide (FGAR) and glutamine to yield formylglycinamidine ribonucleotide (FGAM) and glutamate. The FGAM synthase complex is composed of three subunits. PurQ produces an ammonia molecule by converting glutamine to glutamate. PurL transfers the ammonia molecule to FGAR to form FGAM in an ATP-dependent manner. PurS interacts with PurQ and PurL and is thought to assist in the transfer of the ammonia molecule from PurQ to PurL. In Listeria monocytogenes serovar 1/2a (strain ATCC BAA-679 / EGD-e), this protein is Phosphoribosylformylglycinamidine synthase subunit PurQ.